The sequence spans 567 residues: Maltase A2 (567 aa).

Positions 1-23 (MPKWAHLGLAALLLISTTQEGTA) are cleaved as a signal peptide. N-linked (GlcNAc...) asparagine glycosylation is found at asparagine 30, asparagine 124, and asparagine 198. Aspartate 226 serves as the catalytic Nucleophile. The active-site Proton donor is glutamate 298. Asparagine 312 is a glycosylation site (N-linked (GlcNAc...) asparagine).

The protein belongs to the glycosyl hydrolase 13 family.

The enzyme catalyses Hydrolysis of terminal, non-reducing (1-&gt;4)-linked alpha-D-glucose residues with release of alpha-D-glucose.. The protein is Maltase A2 (Mal-A2) of Drosophila melanogaster (Fruit fly).